Consider the following 342-residue polypeptide: Photosystem II D2 protein (342 aa).

The Cytoplasmic segment spans residues 1-29 (ERGWFDILDDWLKRDRFVFVGWSGILLFP). The helical transmembrane segment at 30-50 (CAYLALGGWLTGTTFVTSWYT) threads the bilayer. Residues 51-113 (HGLASSYLEG…IALHGAFGLI (63 aa)) are Lumenal-facing. Position 107 (histidine 107) interacts with chlorophyll a. Residues 114-130 (GFMLRQFEIARLVGVRP) traverse the membrane as a helical segment. The pheophytin a site is built by glutamine 119 and asparagine 132. The Cytoplasmic segment spans residues 131–141 (YNAIAFSAPIA). A helical membrane pass occupies residues 142–155 (VFVSVFLIYPLGQS). Topologically, residues 156–196 (SWFFAPSFGVAAIFRFLLFFQGFHNWTLNPFHMMGVAGVLG) are lumenal. Histidine 187 lines the chlorophyll a pocket. The helical transmembrane segment at 197 to 217 (GALLCAIHGATVENTLFQDGE) threads the bilayer. Residues histidine 204 and phenylalanine 251 each coordinate a plastoquinone. Position 204 (histidine 204) interacts with Fe cation. At 218-267 (GASTFRAFNPTQAEETYSMVTANRFWSQIFGIAFSNKRWLHFFMLFVPVT) the chain is on the cytoplasmic side. Histidine 258 provides a ligand contact to Fe cation. A helical transmembrane segment spans residues 268–284 (GLWMSAIGVVGLALNLR). The Lumenal segment spans residues 285–342 (SYDFISQEIRAAEDPEFETFYTKNLLLNEGIRAWMAPQDQPHENFVFPEEVLPRGNAL).

The protein belongs to the reaction center PufL/M/PsbA/D family. PSII is composed of 1 copy each of membrane proteins PsbA, PsbB, PsbC, PsbD, PsbE, PsbF, PsbH, PsbI, PsbJ, PsbK, PsbL, PsbM, PsbT, PsbX, PsbY, PsbZ, Psb30/Ycf12, peripheral proteins PsbO, CyanoQ (PsbQ), PsbU, PsbV and a large number of cofactors. It forms dimeric complexes. The D1/D2 heterodimer binds P680, chlorophylls that are the primary electron donor of PSII, and subsequent electron acceptors. It shares a non-heme iron and each subunit binds pheophytin, quinone, additional chlorophylls, carotenoids and lipids. There is also a Cl(-1) ion associated with D1 and D2, which is required for oxygen evolution. The PSII complex binds additional chlorophylls, carotenoids and specific lipids. is required as a cofactor.

The protein localises to the cellular thylakoid membrane. The catalysed reaction is 2 a plastoquinone + 4 hnu + 2 H2O = 2 a plastoquinol + O2. In terms of biological role, photosystem II (PSII) is a light-driven water:plastoquinone oxidoreductase that uses light energy to abstract electrons from H(2)O, generating O(2) and a proton gradient subsequently used for ATP formation. It consists of a core antenna complex that captures photons, and an electron transfer chain that converts photonic excitation into a charge separation. The D1/D2 (PsbA/PsbD) reaction center heterodimer binds P680, the primary electron donor of PSII as well as several subsequent electron acceptors. D2 is needed for assembly of a stable PSII complex. The sequence is that of Photosystem II D2 protein from Thermostichus vulcanus (Synechococcus vulcanus).